Reading from the N-terminus, the 527-residue chain is NAD(P)H-quinone oxidoreductase chain 4 1 (527 aa).

The next 13 helical transmembrane spans lie at 6–26 (FPWLTAIILFPIVAALLVPII), 36–56 (WFALTVGLIDFALIIYAFYSS), 91–111 (LIILTGFITTLAILAAWPVTF), 113–133 (PKLFYFLMLLMYGGQIAVFAV), 136–156 (LLLFFLVWELELVPVYLILSI), 169–189 (FILYTAGGSLFILVAALTMAF), 212–232 (LFLYAGFLIAYGVKLPIFPLH), 243–263 (TAPAHMLLAGILLKMGGYALL), 275–295 (AVFAPVLVILGVVNIIYAALT), 306–326 (IAYSSISHMGFVLIGMASFTD), 331–351 (GAMLQMISHGLIGASLFFMVG), 387–407 (LALPGMSGFVAELMVFIGFAT), and 417–437 (VIIVFLAAIGVILTPIYLLSM).

The protein belongs to the complex I subunit 4 family.

The protein localises to the cellular thylakoid membrane. It carries out the reaction a plastoquinone + NADH + (n+1) H(+)(in) = a plastoquinol + NAD(+) + n H(+)(out). It catalyses the reaction a plastoquinone + NADPH + (n+1) H(+)(in) = a plastoquinol + NADP(+) + n H(+)(out). NDH-1 shuttles electrons from NAD(P)H, via FMN and iron-sulfur (Fe-S) centers, to quinones in the respiratory chain. The immediate electron acceptor for the enzyme in this species is believed to be plastoquinone. Couples the redox reaction to proton translocation (for every two electrons transferred, four hydrogen ions are translocated across the cytoplasmic membrane), and thus conserves the redox energy in a proton gradient. The protein is NAD(P)H-quinone oxidoreductase chain 4 1 of Microcystis aeruginosa (strain NIES-843 / IAM M-2473).